The primary structure comprises 321 residues: Secreted RxLR effector protein 71 (321 aa).

A signal peptide spans 1–23 (MRPTGWRWPVLSLLLVLLPFQAA). Positions 84 to 87 (RSLR) match the RxLR motif. N114 is a glycosylation site (N-linked (GlcNAc...) asparagine). Residues 210–237 (VSLGRDGNGPVRGISSSPTRLTRPRMGG) are disordered.

This sequence belongs to the RxLR effector family.

It is found in the secreted. Its subcellular location is the host cell. Its function is as follows. Secreted effector that partially suppresses the host cell death induced by cell death-inducing proteins. The chain is Secreted RxLR effector protein 71 from Plasmopara viticola (Downy mildew of grapevine).